The following is a 213-amino-acid chain: Uridine kinase (213 aa).

15–22 contacts ATP; the sequence is GASASGKS.

The protein belongs to the uridine kinase family.

It is found in the cytoplasm. It carries out the reaction uridine + ATP = UMP + ADP + H(+). The enzyme catalyses cytidine + ATP = CMP + ADP + H(+). It functions in the pathway pyrimidine metabolism; CTP biosynthesis via salvage pathway; CTP from cytidine: step 1/3. Its pathway is pyrimidine metabolism; UMP biosynthesis via salvage pathway; UMP from uridine: step 1/1. The sequence is that of Uridine kinase from Yersinia pseudotuberculosis serotype O:1b (strain IP 31758).